The primary structure comprises 269 residues: Rhamnulose-1-phosphate aldolase (269 aa).

Residue Glu119 is part of the active site. Zn(2+) is bound by residues His142, His144, and His214.

The protein belongs to the aldolase class II family. RhaD subfamily. It depends on Zn(2+) as a cofactor.

Its subcellular location is the cytoplasm. The catalysed reaction is L-rhamnulose 1-phosphate = (S)-lactaldehyde + dihydroxyacetone phosphate. The protein operates within carbohydrate degradation; L-rhamnose degradation; glycerone phosphate from L-rhamnose: step 3/3. In terms of biological role, catalyzes the reversible cleavage of L-rhamnulose-1-phosphate to dihydroxyacetone phosphate (DHAP) and L-lactaldehyde. The protein is Rhamnulose-1-phosphate aldolase of Bacteroides thetaiotaomicron (strain ATCC 29148 / DSM 2079 / JCM 5827 / CCUG 10774 / NCTC 10582 / VPI-5482 / E50).